Consider the following 146-residue polypeptide: Mitochondrial import receptor subunit TOM20 homolog B (146 aa).

The Mitochondrial intermembrane segment spans residues 1–5; the sequence is MMGGS. Residues 6–25 traverse the membrane as a helical segment; it reads SSRIAAGLGAALFVGYCIYF. The Cytoplasmic segment spans residues 26-146; that stretch reads DRKRRSDPNY…AQSISDDDIE (121 aa). Positions 37–47 are enriched in basic residues; it reads NKLRERRKKQK. A disordered region spans residues 37–56; sequence NKLRERRKKQKAAQEKAGLS. Phosphoserine is present on S141.

It belongs to the Tom20 family. In terms of assembly, forms part of the preprotein translocase complex of the outer mitochondrial membrane (TOM complex). Interacts with tom22.

The protein localises to the mitochondrion outer membrane. Central component of the receptor complex responsible for the recognition and translocation of cytosolically synthesized mitochondrial preproteins. Together with tom22 functions as the transit peptide receptor at the surface of the mitochondrion outer membrane and facilitates the movement of preproteins into the tom40 translocation pore. This chain is Mitochondrial import receptor subunit TOM20 homolog B (tomm20b), found in Danio rerio (Zebrafish).